Consider the following 1036-residue polypeptide: Multidrug resistance protein MdtC (1036 aa).

Helical transmembrane passes span 12 to 34 (VATT…LLPV), 336 to 353 (RALV…FLFL), 360 to 382 (LIPA…LCGF), 431 to 450 (VGFT…IPLL), 463 to 485 (FAIT…TPMM), 528 to 547 (WVLL…YINI), 853 to 875 (LFLI…ESYI), 895 to 917 (LELF…IGIV), 949 to 971 (LRFR…LVLS), and 986 to 1008 (IVGG…YLCF).

This sequence belongs to the resistance-nodulation-cell division (RND) (TC 2.A.6) family. MdtC subfamily. As to quaternary structure, part of a tripartite efflux system composed of MdtA, MdtB and MdtC. MdtC forms a heteromultimer with MdtB.

It is found in the cell inner membrane. The chain is Multidrug resistance protein MdtC from Photorhabdus laumondii subsp. laumondii (strain DSM 15139 / CIP 105565 / TT01) (Photorhabdus luminescens subsp. laumondii).